The sequence spans 449 residues: MNPNQKIITIGSICMVIGIVSLMLQIGNIISIWVSHSIQTGNQHQAEPISNTNFLTEKAVASVTLAGNSSLCPISGWAVHSKDNSIRIGSKGDVFVIREPFISCSHLECRTFFLTQGALLNDKHSNGTVKDRSPHRTLMSCPVGEAPSPYNSRFESVAWSASACHDGTSWLTIGISGPDNGAVAVLKYNGIITDTIKSWRNNILRTQESECACVNGSCFTVMTDGPSNGQASYKIFKMEKGKVVKSVELDAPNYHYEECSCYPDAGEITCVCRDNWHGSNRPWVSFNQNLEYQIGYICSGVFGDNPRPNDGTGSCGPVSPNGAYGVKGFSFKYGNGVWIGRTKSTNSRSGFEMIWDPNGWTGTDSSFSVKQDIVAITDWSGYSGSFVQHPELTGLDCIRPCFWVELIRGRPKERTIWTSGSSISFCGVNSDTVGWSWPDGAELPFTIDK.

Residues 1 to 6 lie on the Intravirion side of the membrane; that stretch reads MNPNQK. The chain crosses the membrane as a helical span at residues 7 to 27; sequence IITIGSICMVIGIVSLMLQIG. The tract at residues 11–33 is involved in apical transport and lipid raft association; sequence GSICMVIGIVSLMLQIGNIISIW. The Virion surface segment spans residues 28-449; sequence NIISIWVSHS…GAELPFTIDK (422 aa). The hypervariable stalk region stretch occupies residues 36–70; the sequence is HSIQTGNQHQAEPISNTNFLTEKAVASVTLAGNSS. Asn-68 carries an N-linked (GlcNAc...) asparagine; by host glycan. Residues 71 to 449 are head of neuraminidase; the sequence is LCPISGWAVH…GAELPFTIDK (379 aa). 8 cysteine pairs are disulfide-bonded: Cys-72-Cys-397, Cys-104-Cys-109, Cys-164-Cys-211, Cys-213-Cys-218, Cys-259-Cys-272, Cys-261-Cys-270, Cys-298-Cys-315, and Cys-401-Cys-426. Arg-98 contributes to the substrate binding site. The N-linked (GlcNAc...) asparagine; by host glycan is linked to Asn-126. Asp-131 functions as the Proton donor/acceptor in the catalytic mechanism. Position 132 (Arg-132) interacts with substrate. Residue Asn-215 is glycosylated (N-linked (GlcNAc...) asparagine; by host). 257 to 258 serves as a coordination point for substrate; it reads EE. Residue Arg-273 coordinates substrate. Residues Asp-274, Gly-278, and Asp-304 each contribute to the Ca(2+) site. Substrate is bound at residue Arg-348. The Nucleophile role is filled by Tyr-382.

Belongs to the glycosyl hydrolase 34 family. As to quaternary structure, homotetramer. Requires Ca(2+) as cofactor. Post-translationally, N-glycosylated.

It localises to the virion membrane. It is found in the host apical cell membrane. The catalysed reaction is Hydrolysis of alpha-(2-&gt;3)-, alpha-(2-&gt;6)-, alpha-(2-&gt;8)- glycosidic linkages of terminal sialic acid residues in oligosaccharides, glycoproteins, glycolipids, colominic acid and synthetic substrates.. Inhibited by the neuraminidase inhibitors zanamivir (Relenza) and oseltamivir (Tamiflu). These drugs interfere with the release of progeny virus from infected cells and are effective against all influenza strains. Resistance to neuraminidase inhibitors is quite rare. Catalyzes the removal of terminal sialic acid residues from viral and cellular glycoconjugates. Cleaves off the terminal sialic acids on the glycosylated HA during virus budding to facilitate virus release. Additionally helps virus spread through the circulation by further removing sialic acids from the cell surface. These cleavages prevent self-aggregation and ensure the efficient spread of the progeny virus from cell to cell. Otherwise, infection would be limited to one round of replication. Described as a receptor-destroying enzyme because it cleaves a terminal sialic acid from the cellular receptors. May facilitate viral invasion of the upper airways by cleaving the sialic acid moieties on the mucin of the airway epithelial cells. Likely to plays a role in the budding process through its association with lipid rafts during intracellular transport. May additionally display a raft-association independent effect on budding. Plays a role in the determination of host range restriction on replication and virulence. Sialidase activity in late endosome/lysosome traffic seems to enhance virus replication. This is Neuraminidase from Aves (Cat).